The primary structure comprises 458 residues: Argininosuccinate lyase (458 aa).

It belongs to the lyase 1 family. Argininosuccinate lyase subfamily.

The protein localises to the cytoplasm. It catalyses the reaction 2-(N(omega)-L-arginino)succinate = fumarate + L-arginine. The protein operates within amino-acid biosynthesis; L-arginine biosynthesis; L-arginine from L-ornithine and carbamoyl phosphate: step 3/3. The polypeptide is Argininosuccinate lyase (Actinobacillus pleuropneumoniae serotype 3 (strain JL03)).